The sequence spans 289 residues: 4-diphosphocytidyl-2-C-methyl-D-erythritol kinase (289 aa).

Lysine 10 is an active-site residue. ATP is bound at residue 94–104 (PVAAGLAGGSS). Residue aspartate 136 is part of the active site.

It belongs to the GHMP kinase family. IspE subfamily.

The catalysed reaction is 4-CDP-2-C-methyl-D-erythritol + ATP = 4-CDP-2-C-methyl-D-erythritol 2-phosphate + ADP + H(+). The protein operates within isoprenoid biosynthesis; isopentenyl diphosphate biosynthesis via DXP pathway; isopentenyl diphosphate from 1-deoxy-D-xylulose 5-phosphate: step 3/6. Its function is as follows. Catalyzes the phosphorylation of the position 2 hydroxy group of 4-diphosphocytidyl-2C-methyl-D-erythritol. The chain is 4-diphosphocytidyl-2-C-methyl-D-erythritol kinase from Geobacillus sp. (strain WCH70).